A 342-amino-acid chain; its full sequence is Anthranilate phosphoribosyltransferase (342 aa).

Residues Gly-80, 83–84 (GD), Thr-88, 90–93 (NIST), 108–116 (KHGNRAVSS), and Ser-120 each bind 5-phospho-alpha-D-ribose 1-diphosphate. Gly-80 lines the anthranilate pocket. Ser-92 serves as a coordination point for Mg(2+). Asn-111 lines the anthranilate pocket. Arg-166 is an anthranilate binding site. Mg(2+)-binding residues include Asp-225 and Glu-226.

The protein belongs to the anthranilate phosphoribosyltransferase family. Homodimer. Mg(2+) serves as cofactor.

It carries out the reaction N-(5-phospho-beta-D-ribosyl)anthranilate + diphosphate = 5-phospho-alpha-D-ribose 1-diphosphate + anthranilate. It functions in the pathway amino-acid biosynthesis; L-tryptophan biosynthesis; L-tryptophan from chorismate: step 2/5. Its function is as follows. Catalyzes the transfer of the phosphoribosyl group of 5-phosphorylribose-1-pyrophosphate (PRPP) to anthranilate to yield N-(5'-phosphoribosyl)-anthranilate (PRA). In Halalkalibacterium halodurans (strain ATCC BAA-125 / DSM 18197 / FERM 7344 / JCM 9153 / C-125) (Bacillus halodurans), this protein is Anthranilate phosphoribosyltransferase.